The following is a 1356-amino-acid chain: DNA-directed RNA polymerase subunit beta (1356 aa).

The protein belongs to the RNA polymerase beta chain family. In terms of assembly, the RNAP catalytic core consists of 2 alpha, 1 beta, 1 beta' and 1 omega subunit. When a sigma factor is associated with the core the holoenzyme is formed, which can initiate transcription.

The enzyme catalyses RNA(n) + a ribonucleoside 5'-triphosphate = RNA(n+1) + diphosphate. Functionally, DNA-dependent RNA polymerase catalyzes the transcription of DNA into RNA using the four ribonucleoside triphosphates as substrates. The sequence is that of DNA-directed RNA polymerase subunit beta from Stutzerimonas stutzeri (strain A1501) (Pseudomonas stutzeri).